The sequence spans 774 residues: Lysyl oxidase homolog 2 (774 aa).

The first 24 residues, 1–24, serve as a signal peptide directing secretion; sequence MEGFLGFNHNHCFIVLFFVSLSLA. 4 consecutive SRCR domains span residues 57 to 158, 187 to 301, 325 to 424, and 434 to 543; these read LRLA…VVCS, IRPI…ASCV, VRLK…VRCN, and LRLV…VSCS. 9 cysteine pairs are disulfide-bonded: cysteine 83-cysteine 147, cysteine 96-cysteine 157, cysteine 127-cysteine 137, cysteine 217-cysteine 290, cysteine 230-cysteine 300, cysteine 264-cysteine 274, cysteine 350-cysteine 413, cysteine 363-cysteine 423, and cysteine 394-cysteine 404. Asparagine 287 carries N-linked (GlcNAc...) asparagine glycosylation. A glycan (N-linked (GlcNAc...) asparagine) is linked at asparagine 454. Cystine bridges form between cysteine 463/cysteine 529, cysteine 476/cysteine 542, and cysteine 510/cysteine 520. A lysyl-oxidase like region spans residues 547–751; the sequence is PDLVLNAELV…MYNSVHNGAN (205 aa). Residues aspartate 548 and leucine 549 each coordinate Ca(2+). 4 disulfides stabilise this stretch: cysteine 572–cysteine 624, cysteine 578–cysteine 694, cysteine 656–cysteine 672, and cysteine 662–cysteine 684. Residues histidine 625, histidine 627, and histidine 629 each contribute to the Cu cation site. N-linked (GlcNAc...) asparagine glycosylation occurs at asparagine 643. A cross-link (lysine tyrosylquinone (Lys-Tyr)) is located at residues 652–688; that stretch reads KASFCLEDTECEADVQKQYECANFGEQGITVGCWDVY. At tyrosine 688 the chain carries 2',4',5'-topaquinone. Residues glutamate 721, aspartate 723, asparagine 726, and asparagine 727 each contribute to the Ca(2+) site.

This sequence belongs to the lysyl oxidase family. Cu cation serves as cofactor. Lysine tyrosylquinone residue is required as a cofactor. In terms of processing, the lysine tyrosylquinone cross-link (LTQ) is generated by condensation of the epsilon-amino group of a lysine with a topaquinone produced by oxidation of tyrosine.

Its subcellular location is the secreted. The protein localises to the extracellular space. The protein resides in the extracellular matrix. It localises to the basement membrane. It is found in the nucleus. Its subcellular location is the chromosome. The protein localises to the endoplasmic reticulum. It catalyses the reaction L-lysyl-[protein] + O2 + H2O = (S)-2-amino-6-oxohexanoyl-[protein] + H2O2 + NH4(+). Mediates the post-translational oxidative deamination of lysine residues on target proteins leading to the formation of deaminated lysine (allysine). Acts as a transcription corepressor and specifically mediates deamination of trimethylated 'Lys-4' of histone H3 (H3K4me3), a specific tag for epigenetic transcriptional activation. Shows no activity against histone H3 when it is trimethylated on 'Lys-9' (H3K9me3) or 'Lys-27' (H3K27me3) or when 'Lys-4' is monomethylated (H3K4me1) or dimethylated (H3K4me2). Also mediates deamination of methylated TAF10, a member of the transcription factor IID (TFIID) complex, which induces release of TAF10 from promoters, leading to inhibition of TFIID-dependent transcription. LOXL2-mediated deamination of TAF10 results in transcriptional repression of genes required for embryonic stem cell pluripotency including POU5F1/OCT4, NANOG, KLF4 and SOX2. Involved in epithelial to mesenchymal transition (EMT) via interaction with SNAI1 and participates in repression of E-cadherin CDH1, probably by mediating deamination of histone H3. During EMT, involved with SNAI1 in negatively regulating pericentromeric heterochromatin transcription. SNAI1 recruits LOXL2 to pericentromeric regions to oxidize histone H3 and repress transcription which leads to release of heterochromatin component CBX5/HP1A, enabling chromatin reorganization and acquisition of mesenchymal traits. Interacts with the endoplasmic reticulum protein HSPA5 which activates the IRE1-XBP1 pathway of the unfolded protein response, leading to expression of several transcription factors involved in EMT and subsequent EMT induction. When secreted into the extracellular matrix, promotes cross-linking of extracellular matrix proteins by mediating oxidative deamination of peptidyl lysine residues in precursors to fibrous collagen and elastin. Acts as a regulator of sprouting angiogenesis, probably via collagen IV scaffolding. Acts as a regulator of chondrocyte differentiation, probably by regulating expression of factors that control chondrocyte differentiation. In Gallus gallus (Chicken), this protein is Lysyl oxidase homolog 2 (LOXL2).